The chain runs to 116 residues: Small ribosomal subunit protein uS13m (116 aa).

The protein belongs to the universal ribosomal protein uS13 family. As to quaternary structure, part of the small ribosomal subunit.

It localises to the mitochondrion. Located at the top of the head of the small subunit, it contacts several helices of the 18S rRNA. This Daucus carota (Wild carrot) protein is Small ribosomal subunit protein uS13m (RPS13).